The following is a 98-amino-acid chain: Cell division topological specificity factor (98 aa).

Belongs to the MinE family.

Prevents the cell division inhibition by proteins MinC and MinD at internal division sites while permitting inhibition at polar sites. This ensures cell division at the proper site by restricting the formation of a division septum at the midpoint of the long axis of the cell. This Moorella thermoacetica (strain ATCC 39073 / JCM 9320) protein is Cell division topological specificity factor.